Reading from the N-terminus, the 895-residue chain is uncharacterized protein (895 aa).

The tract at residues 257–283 is disordered; sequence KSHKYPPGPPDNSSSNTSGQQNTSNTS. Over residues 268–283 the composition is skewed to low complexity; that stretch reads NSSSNTSGQQNTSNTS.

This is an uncharacterized protein from Acanthamoeba polyphaga mimivirus (APMV).